Consider the following 181-residue polypeptide: Adenine phosphoribosyltransferase (181 aa).

Belongs to the purine/pyrimidine phosphoribosyltransferase family. As to quaternary structure, homodimer.

It is found in the cytoplasm. It catalyses the reaction AMP + diphosphate = 5-phospho-alpha-D-ribose 1-diphosphate + adenine. It participates in purine metabolism; AMP biosynthesis via salvage pathway; AMP from adenine: step 1/1. Functionally, catalyzes a salvage reaction resulting in the formation of AMP, that is energically less costly than de novo synthesis. In Vibrio campbellii (strain ATCC BAA-1116), this protein is Adenine phosphoribosyltransferase.